A 247-amino-acid chain; its full sequence is ATP synthase subunit a, chloroplastic (247 aa).

5 helical membrane passes run 38–58 (QVLI…TLAV), 95–115 (VPFI…GALL), 134–154 (INTT…AGLT), 199–219 (LVVV…VMFL), and 220–240 (GLFT…AYIG).

This sequence belongs to the ATPase A chain family. In terms of assembly, F-type ATPases have 2 components, CF(1) - the catalytic core - and CF(0) - the membrane proton channel. CF(1) has five subunits: alpha(3), beta(3), gamma(1), delta(1), epsilon(1). CF(0) has four main subunits: a, b, b' and c.

The protein resides in the plastid. It localises to the chloroplast thylakoid membrane. In terms of biological role, key component of the proton channel; it plays a direct role in the translocation of protons across the membrane. The chain is ATP synthase subunit a, chloroplastic from Jasminum nudiflorum (Winter jasmine).